A 1159-amino-acid polypeptide reads, in one-letter code: PAN2-PAN3 deadenylation complex catalytic subunit pan2 (1159 aa).

Residues 276 to 315 form a WD repeat; it reads ANVSFMLGIDISPSGEALAINDAECMVHLWGSPAKIHFNE. The tract at residues 316–451 is linker; it reads MSKEVELADV…GAKLNGEAED (136 aa). The USP domain occupies 452–821; the sequence is DPLLKYSNVE…VPCVLAFQVK (370 aa). The 177-residue stretch at 872–1048 folds into the Exonuclease domain; that stretch reads LDTEFVDLEK…IEDARMALRL (177 aa). The a divalent metal cation site is built by aspartate 873, glutamate 875, aspartate 982, and aspartate 1041. Residues 1094–1159 are disordered; it reads TAVTMQNTNS…GDFFGGSPLK (66 aa). Over residues 1096–1106 the composition is skewed to polar residues; sequence VTMQNTNSGRN. A compositionally biased stretch (low complexity) spans 1107-1128; the sequence is TPTVPDAAGAPAVPASAPTTPG. Residues 1143–1153 show a composition bias toward gly residues; the sequence is TFSGPGAGDFF.

It belongs to the peptidase C19 family. PAN2 subfamily. Forms a heterotrimer with an asymmetric homodimer of the regulatory subunit pan3 to form the poly(A)-nuclease (PAN) deadenylation complex. A divalent metal cation is required as a cofactor.

The protein localises to the cytoplasm. It carries out the reaction Exonucleolytic cleavage of poly(A) to 5'-AMP.. Its activity is regulated as follows. Positively regulated by the regulatory subunit pan3. In terms of biological role, catalytic subunit of the poly(A)-nuclease (PAN) deadenylation complex, one of two cytoplasmic mRNA deadenylases involved in mRNA turnover. PAN specifically shortens poly(A) tails of RNA and the activity is stimulated by poly(A)-binding protein pab1. PAN deadenylation is followed by rapid degradation of the shortened mRNA tails by the CCR4-NOT complex. Deadenylated mRNAs are then degraded by two alternative mechanisms, namely exosome-mediated 3'-5' exonucleolytic degradation, or deadenylation-dependent mRNA decaping and subsequent 5'-3' exonucleolytic degradation by xrn1. May also be involved in post-transcriptional maturation of mRNA poly(A) tails. This chain is PAN2-PAN3 deadenylation complex catalytic subunit pan2, found in Aspergillus terreus (strain NIH 2624 / FGSC A1156).